The following is a 72-amino-acid chain: SRY-related protein ADW2 (72 aa).

The HMG box DNA-binding region spans 1–69 (VKRPMNAFMV…KHMADYADYK (69 aa)).

It localises to the nucleus. This chain is SRY-related protein ADW2, found in Alligator mississippiensis (American alligator).